Here is a 120-residue protein sequence, read N- to C-terminus: Cell division topological specificity factor (120 aa).

The segment at 93-120 is disordered; sequence LNSCEGENPQQDPGAAPSEGGHLSSPSP.

Belongs to the MinE family.

Functionally, prevents the cell division inhibition by proteins MinC and MinD at internal division sites while permitting inhibition at polar sites. This ensures cell division at the proper site by restricting the formation of a division septum at the midpoint of the long axis of the cell. This Synechococcus sp. (strain JA-3-3Ab) (Cyanobacteria bacterium Yellowstone A-Prime) protein is Cell division topological specificity factor.